Consider the following 206-residue polypeptide: Probable GTP-binding protein EngB (206 aa).

The 175-residue stretch at 24–198 (QGREVAFAGR…HARLDEWLGL (175 aa)) folds into the EngB-type G domain. GTP contacts are provided by residues 32–39 (GRSNVGKS), 59–63 (GRTQL), 77–80 (DLPG), 144–147 (TKAD), and 177–179 (FSA). Residues Ser-39 and Thr-61 each coordinate Mg(2+).

This sequence belongs to the TRAFAC class TrmE-Era-EngA-EngB-Septin-like GTPase superfamily. EngB GTPase family. It depends on Mg(2+) as a cofactor.

In terms of biological role, necessary for normal cell division and for the maintenance of normal septation. The chain is Probable GTP-binding protein EngB from Alkalilimnicola ehrlichii (strain ATCC BAA-1101 / DSM 17681 / MLHE-1).